A 93-amino-acid polypeptide reads, in one-letter code: UPF0521 protein B (93 aa).

Residues 2 to 58 (SLKEVITSLKNDFHSINKEIDSMKENNEKQEEKIFQEIKKLKLEMELLRKDNLSFKT) adopt a coiled-coil conformation.

It belongs to the UPF0521 family.

The polypeptide is UPF0521 protein B (Dictyostelium discoideum (Social amoeba)).